Consider the following 343-residue polypeptide: N-acetyl-gamma-glutamyl-phosphate reductase (343 aa).

Residue C150 is part of the active site.

This sequence belongs to the NAGSA dehydrogenase family. Type 1 subfamily.

The protein localises to the cytoplasm. The enzyme catalyses N-acetyl-L-glutamate 5-semialdehyde + phosphate + NADP(+) = N-acetyl-L-glutamyl 5-phosphate + NADPH + H(+). The protein operates within amino-acid biosynthesis; L-arginine biosynthesis; N(2)-acetyl-L-ornithine from L-glutamate: step 3/4. In terms of biological role, catalyzes the NADPH-dependent reduction of N-acetyl-5-glutamyl phosphate to yield N-acetyl-L-glutamate 5-semialdehyde. The sequence is that of N-acetyl-gamma-glutamyl-phosphate reductase from Nitrosococcus oceani (strain ATCC 19707 / BCRC 17464 / JCM 30415 / NCIMB 11848 / C-107).